A 598-amino-acid chain; its full sequence is Arginine--tRNA ligase (598 aa).

Positions A131–H141 match the 'HIGH' region motif. Positions K288–G309 are disordered.

It belongs to the class-I aminoacyl-tRNA synthetase family. Monomer.

The protein resides in the cytoplasm. The catalysed reaction is tRNA(Arg) + L-arginine + ATP = L-arginyl-tRNA(Arg) + AMP + diphosphate. The protein is Arginine--tRNA ligase of Anaeromyxobacter dehalogenans (strain 2CP-1 / ATCC BAA-258).